Reading from the N-terminus, the 314-residue chain is MSNQLPVINLMGPTASGKTALACELYERGNFELISVDSALVYKDMDIGTAKPTREEQELYPHHLIDIITPLEVYSAAQFVEDACALIDEMHSRGKTPILVGGTMLYFKALLEGLSSNLPSADANVRAAIEEKAANEGWQAVYDELVAVDPAAGVKFKVSDKQRIIRALEVYRITGQPITKLQAEQPKNVPYRYTFHNYALLPDRLELHQRIEQRLSKMWDIGFLSEVESLIEKYDLDENLPSMRSVGYRQALEFLLKSDMSLKKKQEMEDKALFATRQLAKRQYTWLRSLQEIHDFKTYLTIKQAKEDLRNSYG.

Position 12 to 19 (12 to 19 (GPTASGKT)) interacts with ATP. 14 to 19 (TASGKT) contributes to the substrate binding site. 2 interaction with substrate tRNA regions span residues 37–40 (DSAL) and 162–166 (QRIIR).

It belongs to the IPP transferase family. As to quaternary structure, monomer. Requires Mg(2+) as cofactor.

The catalysed reaction is adenosine(37) in tRNA + dimethylallyl diphosphate = N(6)-dimethylallyladenosine(37) in tRNA + diphosphate. Functionally, catalyzes the transfer of a dimethylallyl group onto the adenine at position 37 in tRNAs that read codons beginning with uridine, leading to the formation of N6-(dimethylallyl)adenosine (i(6)A). The protein is tRNA dimethylallyltransferase of Acinetobacter baumannii (strain AB0057).